Consider the following 154-residue polypeptide: Large ribosomal subunit protein uL13 (154 aa).

This sequence belongs to the universal ribosomal protein uL13 family. In terms of assembly, part of the 50S ribosomal subunit.

In terms of biological role, this protein is one of the early assembly proteins of the 50S ribosomal subunit, although it is not seen to bind rRNA by itself. It is important during the early stages of 50S assembly. This chain is Large ribosomal subunit protein uL13, found in Rhizobium rhizogenes (strain K84 / ATCC BAA-868) (Agrobacterium radiobacter).